Consider the following 79-residue polypeptide: Moronecidin (79 aa).

An N-terminal signal peptide occupies residues 1–22; it reads MKCATLFLVLSMVVLMAEPGDA. G44 carries the glycine amide modification. The segment at 45–79 is disordered; that stretch reads GKAEQDQQDQQYQQEQQEQQAQQYQRFNRERAAFD. Positions 47–79 are excised as a propeptide; the sequence is AEQDQQDQQYQQEQQEQQAQQYQRFNRERAAFD. Low complexity predominate over residues 52 to 69; it reads QDQQYQQEQQEQQAQQYQ.

As to expression, expressed in mast cells in gill, skin and gut, and in lining blood vessels in the viscera. Also in intestine, spleen, anterior kidney, and blood cells.

The protein localises to the secreted. Functionally, antimicrobial peptide with broad-spectrum activity against Gram-positive and Gram-negative bacteria as well as against a variety of fungi. Rapidly inactivates channel catfish herpesvirus (ED(50)=4 uM) and frog virus 3 (ED(50)=13 uM) over a wide temperature range. Seems to disrupt the membranes by adopting an alpha helical conformation and forming toroidal pores. Has hemolytic activity. In Morone saxatilis (Striped bass), this protein is Moronecidin.